Here is a 70-residue protein sequence, read N- to C-terminus: DNA-directed RNA polymerase subunit omega (70 aa).

This sequence belongs to the RNA polymerase subunit omega family. The RNAP catalytic core consists of 2 alpha, 1 beta, 1 beta' and 1 omega subunit. When a sigma factor is associated with the core the holoenzyme is formed, which can initiate transcription.

It catalyses the reaction RNA(n) + a ribonucleoside 5'-triphosphate = RNA(n+1) + diphosphate. In terms of biological role, promotes RNA polymerase assembly. Latches the N- and C-terminal regions of the beta' subunit thereby facilitating its interaction with the beta and alpha subunits. This is DNA-directed RNA polymerase subunit omega from Caldanaerobacter subterraneus subsp. tengcongensis (strain DSM 15242 / JCM 11007 / NBRC 100824 / MB4) (Thermoanaerobacter tengcongensis).